The sequence spans 635 residues: 1-deoxy-D-xylulose-5-phosphate synthase (635 aa).

Residues His76 and 117–119 each bind thiamine diphosphate; that span reads GHS. Asp148 is a binding site for Mg(2+). Thiamine diphosphate contacts are provided by residues 149-150, Asn177, Tyr294, and Glu379; that span reads GA. Asn177 provides a ligand contact to Mg(2+).

The protein belongs to the transketolase family. DXPS subfamily. Homodimer. Mg(2+) is required as a cofactor. It depends on thiamine diphosphate as a cofactor.

The enzyme catalyses D-glyceraldehyde 3-phosphate + pyruvate + H(+) = 1-deoxy-D-xylulose 5-phosphate + CO2. Its pathway is metabolic intermediate biosynthesis; 1-deoxy-D-xylulose 5-phosphate biosynthesis; 1-deoxy-D-xylulose 5-phosphate from D-glyceraldehyde 3-phosphate and pyruvate: step 1/1. In terms of biological role, catalyzes the acyloin condensation reaction between C atoms 2 and 3 of pyruvate and glyceraldehyde 3-phosphate to yield 1-deoxy-D-xylulose-5-phosphate (DXP). This is 1-deoxy-D-xylulose-5-phosphate synthase from Neisseria meningitidis serogroup C (strain 053442).